We begin with the raw amino-acid sequence, 228 residues long: MTLDIEEKEEIVTSLTKAEIHLSGLDENWKRLVKLVGNYRPNRSMEKKEPYEELIRAVASQQLHSKAANAIFNRFKSISNNGQFPTPEEIRDMDFEIMRACGFSARKIDSLKSIAEATISGLIPTKEEAERLSNEELIERLTQIKGIGRWTVEMLLIFSLNRDDVMPADDLSIRNGYRYLHRLPKIPTKMYVLKHSEICAPFRTAAAWYLWKTSKLADYTKPVRPKKH.

Residue D170 is the Proton acceptor of the active site.

The protein belongs to the alkylbase DNA glycosidase AlkA family.

It catalyses the reaction Hydrolysis of alkylated DNA, releasing 3-methyladenine, 3-methylguanine, 7-methylguanine and 7-methyladenine.. In terms of biological role, hydrolysis of the deoxyribose N-glycosidic bond to excise 3-methyladenine or 7-methyladenine from the damaged DNA polymer formed by alkylation lesions. Can release ethylated and propylated bases from DNA in addition to 3-methyladenine. This chain is DNA-3-methyladenine glycosylase 1 (mag1), found in Schizosaccharomyces pombe (strain 972 / ATCC 24843) (Fission yeast).